Reading from the N-terminus, the 119-residue chain is HTH-type transcriptional regulator SarX (119 aa).

A DNA-binding region (H-T-H motif) is located at residues 55 to 78 (LKTAMDELDLSRTKLLVSIRRLIE).

It belongs to the SarA family.

Its subcellular location is the cytoplasm. In terms of biological role, involved in the regulation of virulence genes. Acts as a repressor of the agr locus and consequently targets genes regulated by the agr system such as sspA, hla and hlb. Binds directly to the agr promoter region. In Staphylococcus aureus (strain bovine RF122 / ET3-1), this protein is HTH-type transcriptional regulator SarX (sarX).